Consider the following 735-residue polypeptide: Disintegrin and metalloproteinase domain-containing protein 2 (735 aa).

The first 16 residues, methionine 1–methionine 16, serve as a signal peptide directing secretion. The propeptide occupies aspartate 17–glutamine 174. N-linked (GlcNAc...) asparagine glycans are attached at residues asparagine 122 and asparagine 220. Over aspartate 175–arginine 686 the chain is Extracellular. The Peptidase M12B domain occupies lysine 178–proline 375. Intrachain disulfides connect cysteine 287–cysteine 370, cysteine 329–cysteine 354, cysteine 331–cysteine 336, and cysteine 445–cysteine 465. 3 N-linked (GlcNAc...) asparagine glycosylation sites follow: asparagine 353, asparagine 459, and asparagine 566. Residues glutamine 384–threonine 473 enclose the Disintegrin domain. One can recognise an EGF-like domain in the interval leucine 612 to serine 645. 3 cysteine pairs are disulfide-bonded: cysteine 616-cysteine 627, cysteine 621-cysteine 633, and cysteine 635-cysteine 644. The chain crosses the membrane as a helical span at residues tryptophan 687–valine 707. Topologically, residues lysine 708–glycine 735 are cytoplasmic. A Phosphoserine modification is found at serine 729.

The prodomain and the metalloprotease domain are cleaved during the epididymal maturation of the spermatozoa. In terms of tissue distribution, expressed specifically in spermatogenic cells in the seminiferous cells. Not detected in fetal tissues.

The protein localises to the membrane. In terms of biological role, sperm surface membrane protein that may be involved in sperm-egg plasma membrane adhesion and fusion during fertilization. Could have a direct role in sperm-zona binding or migration of sperm from the uterus into the oviduct. Interactions with egg membrane could be mediated via binding between its disintegrin-like domain to one or more integrins receptors on the egg. This is a non catalytic metalloprotease-like protein. This Homo sapiens (Human) protein is Disintegrin and metalloproteinase domain-containing protein 2 (ADAM2).